Here is a 244-residue protein sequence, read N- to C-terminus: U4/U6.U5 tri-snRNP-associated protein 3-like protein C162.01c (244 aa).

Basic and acidic residues-rich tracts occupy residues 1–11 and 20–116; these read MSSSRSGEHRR and ESSR…RRDG. 2 disordered regions span residues 1–192 and 223–244; these read MSSS…EDEA and KKTK…LDNE. 2 positions are modified to phosphoserine: serine 121 and serine 140. The segment covering 126–182 has biased composition (basic and acidic residues); the sequence is GLERKREHEKLQAPSPKEEEERPVDQGDKMDGVKEDKDGSLEVGKSHDAMTRTKSAE. Residues 183-192 show a composition bias toward acidic residues; it reads EEIVEQEDEA.

This sequence belongs to the SNUT3 family. In terms of assembly, part of a tri-snRNP complex.

Its subcellular location is the nucleus. In terms of biological role, may play a role in mRNA splicing. In Schizosaccharomyces pombe (strain 972 / ATCC 24843) (Fission yeast), this protein is U4/U6.U5 tri-snRNP-associated protein 3-like protein C162.01c.